A 338-amino-acid chain; its full sequence is Mitoferrin-1 (338 aa).

The interval 1-37 (MELRRGGVGNQAAGRRMDGDCRDGGCGSKDAGSEDYE) is disordered. Solcar repeat units lie at residues 43–131 (ASVS…MKRT), 141–225 (NSHL…LQEQ), and 232–326 (YNPQ…FKYI). 6 consecutive transmembrane segments (helical) span residues 45-64 (VSTH…SIMY), 106-125 (GLNV…FACY), 143-162 (HLAN…AVMN), 200-219 (SYTT…FITY), 234-253 (PQSH…AATT), and 301-320 (GIQA…WSVY).

This sequence belongs to the mitochondrial carrier (TC 2.A.29) family. As to quaternary structure, interacts with ACB10; this interaction stabilizes SLC25A37 and enhances the function of SLC25A37 to import mitochondrial iron during erythroid differentiation. In terms of tissue distribution, highly expressed in hematopoietic organs, fetal liver, bone marrow and spleen.

Its subcellular location is the mitochondrion inner membrane. The catalysed reaction is Fe(2+)(in) = Fe(2+)(out). Mitochondrial iron transporter that specifically mediates iron uptake in developing erythroid cells, thereby playing an essential role in heme biosynthesis. This Mus musculus (Mouse) protein is Mitoferrin-1 (Slc25a37).